We begin with the raw amino-acid sequence, 962 residues long: SH3 domain-binding protein 4 (962 aa).

Residues 55 to 114 (GNAKEVIAIKDYCPNNFTTLKFSKGDHLYVLDTSGGEWWYAHNTTEMGYIPSSYVQPLNY) enclose the SH3 1 domain. A phosphoserine mark is found at Ser131, Ser245, Ser250, Ser278, and Ser295. Residues 316 to 453 (TNIVCKLDSS…LEPCMYLAIV (138 aa)) form the ZU5 domain. Ser636 is subject to Phosphoserine. One can recognise an SH3 2 domain in the interval 653–723 (SSLKFGKLLK…HTKNVLVVGK (71 aa)).

As to quaternary structure, homodimer or homooligomer. Interacts with DNM2, EPS15, clathrin, the adapter protein complex 2/AP-2 and TFRC. Interacts with the Rag GTPases RRAGA, RRAGB, RRAGC and RRAGD; the interaction is most probably direct, preferentially occurs with their inactive GDP-bound form and is negatively regulated by amino acids. In terms of processing, phosphorylated upon EGF stimulation. Phosphorylation prevents interaction with DNM2.

The protein localises to the membrane. It is found in the clathrin-coated pit. The protein resides in the cytoplasmic vesicle. It localises to the clathrin-coated vesicle. Its subcellular location is the nucleus. In terms of biological role, may function in transferrin receptor internalization at the plasma membrane through a cargo-specific control of clathrin-mediated endocytosis. Alternatively, may act as a negative regulator of the amino acid-induced TOR signaling by inhibiting the formation of active Rag GTPase complexes. Preferentially binds inactive Rag GTPase complexes and prevents their interaction with the mTORC1 complex inhibiting its relocalization to lysosomes and its activation. Thereby, may indirectly regulate cell growth, proliferation and autophagy. The chain is SH3 domain-binding protein 4 (Sh3bp4) from Mus musculus (Mouse).